Reading from the N-terminus, the 301-residue chain is 5'-adenylylsulfate reductase-like 5 (301 aa).

A signal peptide spans 1-21 (MTRCAVVAAVAAVLLVAGAAA). Residues 51-164 (CIRIEPSPPV…LVDFYKETTG (114 aa)) form the Thioredoxin domain. A glycan (N-linked (GlcNAc...) asparagine) is linked at Asn-139. A helical transmembrane segment spans residues 201–221 (FVLLAVLFIILKVAAHFVPIV). The N-linked (GlcNAc...) asparagine glycan is linked to Asn-268.

Its subcellular location is the membrane. In Oryza sativa subsp. japonica (Rice), this protein is 5'-adenylylsulfate reductase-like 5 (APRL5).